Reading from the N-terminus, the 154-residue chain is Myoglobin (154 aa).

Residues 2 to 148 (VLSEGEWQLV…FRKDIAAKYK (147 aa)) form the Globin domain. At serine 4 the chain carries Phosphoserine. Histidine 65 contributes to the nitrite binding site. Histidine 65 serves as a coordination point for O2. Threonine 68 is subject to Phosphothreonine. Residue histidine 94 participates in heme b binding.

Belongs to the globin family. In terms of assembly, monomeric.

It is found in the cytoplasm. It localises to the sarcoplasm. It carries out the reaction Fe(III)-heme b-[protein] + nitric oxide + H2O = Fe(II)-heme b-[protein] + nitrite + 2 H(+). It catalyses the reaction H2O2 + AH2 = A + 2 H2O. Its function is as follows. Monomeric heme protein which primary function is to store oxygen and facilitate its diffusion within muscle tissues. Reversibly binds oxygen through a pentacoordinated heme iron and enables its timely and efficient release as needed during periods of heightened demand. Depending on the oxidative conditions of tissues and cells, and in addition to its ability to bind oxygen, it also has a nitrite reductase activity whereby it regulates the production of bioactive nitric oxide. Under stress conditions, like hypoxia and anoxia, it also protects cells against reactive oxygen species thanks to its pseudoperoxidase activity. The polypeptide is Myoglobin (MB) (Physeter macrocephalus (Sperm whale)).